A 503-amino-acid polypeptide reads, in one-letter code: uncharacterized protein (503 aa).

ABC transporter domains follow at residues 8 to 249 and 261 to 499; these read VPVA…LGRD and IVDQ…MSAI. 43–50 contacts ATP; sequence GKNGAGKS.

It belongs to the ABC transporter superfamily.

Functionally, probably part of a binding-protein-dependent transport system YphDEF. Probably responsible for energy coupling to the transport system. This is an uncharacterized protein from Escherichia coli (strain K12).